We begin with the raw amino-acid sequence, 319 residues long: Transcription factor bHLH111 (319 aa).

Residues 1 to 23 (MDHHHHIASRNSSTTSELPSFEP) are disordered. Polar residues predominate over residues 9–18 (SRNSSTTSEL). Positions 195 to 244 (SEGSTLSPEKELPKAKLRDKITTLQQIVSPFGKTDTASVLQEAITYINFY) constitute a bHLH domain.

As to quaternary structure, homodimer.

It localises to the nucleus. The sequence is that of Transcription factor bHLH111 (BHLH111) from Arabidopsis thaliana (Mouse-ear cress).